We begin with the raw amino-acid sequence, 238 residues long: tRNA (guanine-N(1)-)-methyltransferase (238 aa).

S-adenosyl-L-methionine contacts are provided by residues G112 and 131 to 136 (LGDFIL).

The protein belongs to the RNA methyltransferase TrmD family. As to quaternary structure, homodimer.

The protein resides in the cytoplasm. It carries out the reaction guanosine(37) in tRNA + S-adenosyl-L-methionine = N(1)-methylguanosine(37) in tRNA + S-adenosyl-L-homocysteine + H(+). In terms of biological role, specifically methylates guanosine-37 in various tRNAs. The polypeptide is tRNA (guanine-N(1)-)-methyltransferase (Nostoc punctiforme (strain ATCC 29133 / PCC 73102)).